Here is a 159-residue protein sequence, read N- to C-terminus: MVGRLTHVDEKGVKMVEIGHKDVVFRKAIAKGRIRLRPETIKLIREGKIEKGNVLATAQIAGILAVKKTPELIPLCHPIPLTGVDITFEFGEDYIEATCEVRAYYKTGVEMEALTGVTVALLTIWDMVKAVEKDEHGQYPYTRIEDVRVVEKIKTYSTQ.

Substrate is bound by residues 75 to 77 and 111 to 112; these read LCH and ME. Residue Asp-126 is part of the active site.

Belongs to the MoaC family. As to quaternary structure, homohexamer; trimer of dimers.

It carries out the reaction (8S)-3',8-cyclo-7,8-dihydroguanosine 5'-triphosphate = cyclic pyranopterin phosphate + diphosphate. The protein operates within cofactor biosynthesis; molybdopterin biosynthesis. Its function is as follows. Catalyzes the conversion of (8S)-3',8-cyclo-7,8-dihydroguanosine 5'-triphosphate to cyclic pyranopterin monophosphate (cPMP). The chain is Probable cyclic pyranopterin monophosphate synthase from Pyrococcus abyssi (strain GE5 / Orsay).